The primary structure comprises 144 residues: Superoxide dismutase [Mn] 1 (144 aa).

Mn(2+) contacts are provided by H42, D124, and H128.

Belongs to the iron/manganese superoxide dismutase family. Mn(2+) is required as a cofactor.

It catalyses the reaction 2 superoxide + 2 H(+) = H2O2 + O2. Destroys superoxide anion radicals which are normally produced within the cells and which are toxic to biological systems. The sequence is that of Superoxide dismutase [Mn] 1 (sod1) from Haloferax mediterranei (Halobacterium mediterranei).